The sequence spans 84 residues: MVTEKTLERINELYHKSKAEGLTDAELAEQKQLRADYVKAFRENLRGQLESIKIKNPDGSLIDVKARHDEKMKRLAEEQAEKGN.

The protein belongs to the UPF0291 family.

It localises to the cytoplasm. This chain is UPF0291 protein EUBELI_00985, found in Lachnospira eligens (strain ATCC 27750 / DSM 3376 / VPI C15-48 / C15-B4) (Eubacterium eligens).